Here is a 599-residue protein sequence, read N- to C-terminus: Histone-arginine methyltransferase CARMER (599 aa).

The region spanning 127-434 is the SAM-dependent MTase PRMT-type domain; sequence ASQYFQFYGY…QRQSYDVEID (308 aa). 6 residues coordinate S-adenosyl-L-methionine: Gln140, Arg149, Gly173, Glu195, Glu224, and Thr252. Arg487 bears the Asymmetric dimethylarginine; by autocatalysis mark.

Belongs to the class I-like SAM-binding methyltransferase superfamily. Protein arginine N-methyltransferase family. Homodimer. The dimethylated protein is the major form.

Its subcellular location is the cytoplasm. It localises to the nucleus. It catalyses the reaction L-arginyl-[protein] + 2 S-adenosyl-L-methionine = N(omega),N(omega)-dimethyl-L-arginyl-[protein] + 2 S-adenosyl-L-homocysteine + 2 H(+). In terms of biological role, methylates (mono- and asymmetric dimethylation) the guanidino nitrogens of arginyl residues in proteins. May methylate histone H3 at 'Arg-17' and activate transcription via chromatin remodeling. This is Histone-arginine methyltransferase CARMER (Art4) from Culex quinquefasciatus (Southern house mosquito).